The primary structure comprises 244 residues: 5-oxoprolinase subunit A (244 aa).

Belongs to the LamB/PxpA family. As to quaternary structure, forms a complex composed of PxpA, PxpB and PxpC.

The catalysed reaction is 5-oxo-L-proline + ATP + 2 H2O = L-glutamate + ADP + phosphate + H(+). Catalyzes the cleavage of 5-oxoproline to form L-glutamate coupled to the hydrolysis of ATP to ADP and inorganic phosphate. The polypeptide is 5-oxoprolinase subunit A (Salmonella typhi).